We begin with the raw amino-acid sequence, 584 residues long: Kinesin-like protein KIN-10C (584 aa).

Residues 11–324 (PVRVVLRVRP…VSLAARSRHV (314 aa)) enclose the Kinesin motor domain. 99-106 (GATGSGKT) contacts ATP. Disordered stretches follow at residues 377–398 (SMSH…AMDQ) and 445–469 (DKTG…KQRT).

It belongs to the TRAFAC class myosin-kinesin ATPase superfamily. Kinesin family. KIN-10 subfamily.

The chain is Kinesin-like protein KIN-10C from Oryza sativa subsp. japonica (Rice).